The primary structure comprises 89 residues: Helix-loop-helix protein 15 (89 aa).

The disordered stretch occupies residues methionine 1 to lysine 32. A compositionally biased stretch (basic residues) spans glutamate 22–lysine 32. Residues lysine 32 to valine 45 form a basic motif region. The region spanning lysine 32–leucine 84 is the bHLH domain. A helix-loop-helix motif region spans residues glutamate 46 to leucine 84.

As to expression, expressed in sensory head neurons of the lateral ganglion.

The protein localises to the nucleus. In terms of biological role, transcription factor which binds the E box motif 5'-CA[TC][AG]TG-3'. Involved in modulating physiological aging, probably by regulating expression of branched-chain amino acid transferase-1, bcat-1. This is Helix-loop-helix protein 15 from Caenorhabditis elegans.